Consider the following 65-residue polypeptide: Large ribosomal subunit protein uL29 (65 aa).

This sequence belongs to the universal ribosomal protein uL29 family.

The sequence is that of Large ribosomal subunit protein uL29 from Acidithiobacillus ferrooxidans (strain ATCC 23270 / DSM 14882 / CIP 104768 / NCIMB 8455) (Ferrobacillus ferrooxidans (strain ATCC 23270)).